A 369-amino-acid chain; its full sequence is DNA polymerase IV 2 (369 aa).

Residues valine 17–glycine 201 form the UmuC domain. Aspartate 21 and aspartate 119 together coordinate Mg(2+). Glutamate 120 is a catalytic residue.

This sequence belongs to the DNA polymerase type-Y family. In terms of assembly, monomer. Mg(2+) is required as a cofactor.

It is found in the cytoplasm. It carries out the reaction DNA(n) + a 2'-deoxyribonucleoside 5'-triphosphate = DNA(n+1) + diphosphate. Poorly processive, error-prone DNA polymerase involved in untargeted mutagenesis. Copies undamaged DNA at stalled replication forks, which arise in vivo from mismatched or misaligned primer ends. These misaligned primers can be extended by PolIV. Exhibits no 3'-5' exonuclease (proofreading) activity. May be involved in translesional synthesis. The chain is DNA polymerase IV 2 (dbh2) from Methanosarcina mazei (strain ATCC BAA-159 / DSM 3647 / Goe1 / Go1 / JCM 11833 / OCM 88) (Methanosarcina frisia).